The sequence spans 423 residues: MTRIVDIVGREVLDSRGNPTVEVDVYLENGVFGRSAVPSGASTGAHEAVELRDGGKRYQGKGVEKAVAAINGEIFKELGGRDARNQLAIDQAMIALDGTSNKERLGANAILGVSLSVAKAAAKSFGLPLYRYIGGTQAHLLPTPMMNIINGGAHADNPIDFQEFMIIPVGAPTFKEAVRYGAEIFHTLKRYLQDAGYNTNVGDEGGFAPNLKSAEQAINLIMESITSCGYKPGEQIAIGLDCASTEFYKNSLYAYEGEGKCRDVKEQVEYLAHLVDSYPIITIEDGMAEDDWAGWKQLTQAIGNKCQLVGDDLFVTNSARLRDGIKMGAANSILIKVNQIGTLSETLDAIETAHKAGYRAIISHRSGETEDSFIADLTVATNCGQIKTGSLARSDRLAKYNQLIRIEEMLGTQARYEGNWHRR.

Residue Gln162 participates in (2R)-2-phosphoglycerate binding. The active-site Proton donor is the Glu204. Residues Asp241, Glu284, and Asp311 each contribute to the Mg(2+) site. Residues Lys336, Arg365, Ser366, and Lys387 each contribute to the (2R)-2-phosphoglycerate site. The Proton acceptor role is filled by Lys336.

The protein belongs to the enolase family. Requires Mg(2+) as cofactor.

The protein resides in the cytoplasm. It localises to the secreted. It is found in the cell surface. The enzyme catalyses (2R)-2-phosphoglycerate = phosphoenolpyruvate + H2O. Its pathway is carbohydrate degradation; glycolysis; pyruvate from D-glyceraldehyde 3-phosphate: step 4/5. Its function is as follows. Catalyzes the reversible conversion of 2-phosphoglycerate (2-PG) into phosphoenolpyruvate (PEP). It is essential for the degradation of carbohydrates via glycolysis. This Bartonella bacilliformis (strain ATCC 35685 / KC583 / Herrer 020/F12,63) protein is Enolase.